We begin with the raw amino-acid sequence, 878 residues long: Phosphoenolpyruvate carboxylase (878 aa).

Active-site residues include histidine 140 and lysine 545.

It belongs to the PEPCase type 1 family. Mg(2+) is required as a cofactor.

The catalysed reaction is oxaloacetate + phosphate = phosphoenolpyruvate + hydrogencarbonate. Forms oxaloacetate, a four-carbon dicarboxylic acid source for the tricarboxylic acid cycle. The protein is Phosphoenolpyruvate carboxylase of Pseudomonas aeruginosa (strain ATCC 15692 / DSM 22644 / CIP 104116 / JCM 14847 / LMG 12228 / 1C / PRS 101 / PAO1).